We begin with the raw amino-acid sequence, 172 residues long: Large ribosomal subunit protein eL20 (172 aa).

This sequence belongs to the eukaryotic ribosomal protein eL20 family. In terms of assembly, component of the large ribosomal subunit. Mature ribosomes consist of a small (40S) and a large (60S) subunit. The 40S subunit contains about 32 different proteins and 1 molecule of RNA (18S). The 60S subunit contains 45 different proteins and 3 molecules of RNA (25S, 5.8S and 5S).

It is found in the cytoplasm. Its function is as follows. Component of the ribosome, a large ribonucleoprotein complex responsible for the synthesis of proteins in the cell. The small ribosomal subunit (SSU) binds messenger RNAs (mRNAs) and translates the encoded message by selecting cognate aminoacyl-transfer RNA (tRNA) molecules. The large subunit (LSU) contains the ribosomal catalytic site termed the peptidyl transferase center (PTC), which catalyzes the formation of peptide bonds, thereby polymerizing the amino acids delivered by tRNAs into a polypeptide chain. The nascent polypeptides leave the ribosome through a tunnel in the LSU and interact with protein factors that function in enzymatic processing, targeting, and the membrane insertion of nascent chains at the exit of the ribosomal tunnel. The sequence is that of Large ribosomal subunit protein eL20 from Candida albicans (strain SC5314 / ATCC MYA-2876) (Yeast).